We begin with the raw amino-acid sequence, 134 residues long: ATP synthase epsilon chain (134 aa).

This sequence belongs to the ATPase epsilon chain family. F-type ATPases have 2 components, CF(1) - the catalytic core - and CF(0) - the membrane proton channel. CF(1) has five subunits: alpha(3), beta(3), gamma(1), delta(1), epsilon(1). CF(0) has three main subunits: a, b and c.

It localises to the cell membrane. In terms of biological role, produces ATP from ADP in the presence of a proton gradient across the membrane. This chain is ATP synthase epsilon chain, found in Carboxydothermus hydrogenoformans (strain ATCC BAA-161 / DSM 6008 / Z-2901).